Reading from the N-terminus, the 199-residue chain is NADH-quinone oxidoreductase subunit C (199 aa).

The protein belongs to the complex I 30 kDa subunit family. As to quaternary structure, NDH-1 is composed of 14 different subunits. Subunits NuoB, C, D, E, F, and G constitute the peripheral sector of the complex.

The protein resides in the cell inner membrane. It catalyses the reaction a quinone + NADH + 5 H(+)(in) = a quinol + NAD(+) + 4 H(+)(out). In terms of biological role, NDH-1 shuttles electrons from NADH, via FMN and iron-sulfur (Fe-S) centers, to quinones in the respiratory chain. The immediate electron acceptor for the enzyme in this species is believed to be ubiquinone. Couples the redox reaction to proton translocation (for every two electrons transferred, four hydrogen ions are translocated across the cytoplasmic membrane), and thus conserves the redox energy in a proton gradient. The chain is NADH-quinone oxidoreductase subunit C from Rhodobacter capsulatus (Rhodopseudomonas capsulata).